Reading from the N-terminus, the 382-residue chain is Phenylalanine dehydrogenase (382 aa).

Residue arginine 54 participates in NAD(+) binding. Residue lysine 78 coordinates L-phenylalanine. Catalysis depends on lysine 90, which acts as the Proton donor/acceptor. Residues aspartate 125, serine 156, threonine 160, 190-196 (GLGKVGY), 213-214 (DI), 253-254 (AF), and 274-276 (SAN) contribute to the NAD(+) site. Asparagine 276 contributes to the L-phenylalanine binding site.

It belongs to the Glu/Leu/Phe/Val dehydrogenases family.

The enzyme catalyses L-phenylalanine + NAD(+) + H2O = 3-phenylpyruvate + NH4(+) + NADH + H(+). With respect to regulation, activity is not affected by the metal chelating agent EDTA. Addition of 1 mM Mg(2+) results in 15% increase in activity, while the enzyme is strongly inhibited by 1 mM Fe(3+), Fe(2+), Cu(2+), Zn(2+) and Ag(+). Functionally, catalyzes the reversible NAD(+)-dependent oxidative deamination of L-phenylalanine to phenylpyruvate. Can also catalyze the oxidative deamination of several other amino acids, with much lower efficiency. Shows activity towards various bulky aromatic alpha-keto acids/esters and (S)-amine alcohols. Can catalyze the amination of 3-(2-chlorophenyl)-2-oxopropionic acid (CPOA) to produce 2-chloro-L-phenylalanine (2-Cl-Phe), a chemical compound used in the pharmaceutical and biotechnology industries. Shows a preference for amination over deamination. This is Phenylalanine dehydrogenase from Bacillus thermotolerans (Quasibacillus thermotolerans).